We begin with the raw amino-acid sequence, 286 residues long: Centromere protein P (286 aa).

Residues 1 to 73 (MDSETRELRA…RSEHSFLSKL (73 aa)) are a coiled coil. Residue serine 38 is modified to Phosphoserine.

It belongs to the CENP-P/CTF19 family. Component of the CENPA-CAD complex, composed of CENPI, CENPK, CENPL, CENPO, CENPP, CENPQ, CENPR and CENPS. The CENPA-CAD complex interacts with the CENPA-NAC complex, at least composed of CENPA, CENPC, CENPH, CENPM, CENPN, CENPT and CENPU.

The protein localises to the nucleus. It localises to the chromosome. The protein resides in the centromere. Its function is as follows. Component of the CENPA-CAD (nucleosome distal) complex, a complex recruited to centromeres which is involved in assembly of kinetochore proteins, mitotic progression and chromosome segregation. May be involved in incorporation of newly synthesized CENPA into centromeres via its interaction with the CENPA-NAC complex. This is Centromere protein P (Cenpp) from Mus musculus (Mouse).